Consider the following 936-residue polypeptide: Intimin (936 aa).

Residues 1-41 (MIIHGFCTGTRHKHKLRKTFIMLGAGLGLFFSVNQNSFANG) form the signal peptide. The 50-residue stretch at 63-112 (LFYTLKTGESVAQLSKSQGISVPVIWSLNKHLYSSESEMMKASPGQQIIL) folds into the LysM domain. Big-1 domains follow at residues 557-650 (ITNF…VIFV) and 657-748 (ITEI…VEFF). One can recognise a BIG2 domain in the interval 780–831 (KLQATGGNGKYTWKSSNTKIASVDNSGVITLNEKGSATITVVSGDNQSATYT). A disulfide bridge links Cys-857 with Cys-934.

It belongs to the intimin/invasin family.

The protein localises to the cell outer membrane. Functionally, an inverse autotransporter. This Citrobacter freundii protein is Intimin (eae).